The following is a 120-amino-acid chain: NAD(P)H-quinone oxidoreductase subunit 3, chloroplastic (120 aa).

Transmembrane regions (helical) follow at residues 9-29, 64-84, and 88-108; these read IFWAFLIISSVIPILAFLISG, MFALVFVVFDVETVFLYPWAM, and VLGVSVFVEALIFVLILIVGL.

This sequence belongs to the complex I subunit 3 family. NDH is composed of at least 16 different subunits, 5 of which are encoded in the nucleus.

The protein resides in the plastid. It is found in the chloroplast thylakoid membrane. The enzyme catalyses a plastoquinone + NADH + (n+1) H(+)(in) = a plastoquinol + NAD(+) + n H(+)(out). It catalyses the reaction a plastoquinone + NADPH + (n+1) H(+)(in) = a plastoquinol + NADP(+) + n H(+)(out). Its function is as follows. NDH shuttles electrons from NAD(P)H:plastoquinone, via FMN and iron-sulfur (Fe-S) centers, to quinones in the photosynthetic chain and possibly in a chloroplast respiratory chain. The immediate electron acceptor for the enzyme in this species is believed to be plastoquinone. Couples the redox reaction to proton translocation, and thus conserves the redox energy in a proton gradient. The polypeptide is NAD(P)H-quinone oxidoreductase subunit 3, chloroplastic (Ranunculus macranthus (Large buttercup)).